Reading from the N-terminus, the 816-residue chain is H(+)/Cl(-) exchange transporter 5 (816 aa).

The Cytoplasmic portion of the chain corresponds to 1 to 124; it reads MAMWQGAMDN…WALIHSVSDA (124 aa). Helical transmembrane passes span 125 to 162 and 208 to 231; these read FSGWLLMLLIGLLSGSLAGLIDISAHWMTDLKEGICTG and VNYFMYVLWALLFAFLAVSLVKAF. The Selectivity filter part_1 motif lies at 237–241; that stretch reads GSGIP. Ser-238 is a binding site for chloride. The segment at residues 240–247 is an intramembrane region (helical); the sequence is IPEIKTIL. The next 2 helical transmembrane spans lie at 256-275 and 281-300; these read LGKWTLVIKTITLVLAVSSG and EGPLVHVACCCGNILCHCFN. Residues 279–283 carry the Selectivity filter part_2 motif; it reads GKEGP. 2 consecutive intramembrane regions (helical) follow at residues 312–324 and 328–336; these read VLSAAAAAGVSVA and PIGGVLFSL. The next 5 membrane-spanning stretches (helical) occupy residues 348 to 366, 389 to 414, 422 to 442, 498 to 518, and 523 to 542; these read LWRSFFAALVAAFTLRSIN, LVPFIVLGIFGGLWGALFIRTNIAWC, LGKYPVVEVLIVTAITAILAF, MWQLALTLILKIVITIFTFGM, and GLFIPSMAVGAIAGRLLGVG. The Selectivity filter part_3 signature appears at 523–527; it reads GLFIP. Phe-525 serves as a coordination point for chloride. The helical intramembrane region spans 570–584; sequence GLYAMVGAAACLGGV. The segment at residues 585–587 is an intramembrane region (note=Loop between two helices); that stretch reads TRM. An intramembrane region (helical) is located at residues 588–599; the sequence is TVSLVVIMFELT. Positions 600–604 form an intramembrane region, note=Loop between two helices; it reads GGLEY. Residues 605 to 622 form a helical membrane-spanning segment; sequence IVPLMAAAMTSKWVADAL. Topologically, residues 623 to 816 are cytoplasmic; sequence GREGIYDAHI…NQDPESILFN (194 aa). Tyr-628 provides a ligand contact to chloride. CBS domains follow at residues 656–720 and 752–811; these read MKPR…ARKK and ILDL…QDPE. ATP-binding positions include Thr-666, 687-689, and 794-797; these read YSG and TKKD.

The protein belongs to the chloride channel (TC 2.A.49) family. ClC-5/CLCN5 subfamily. As to quaternary structure, interacts with NEDD4 and NEDD4L. In terms of processing, ubiquitinated by NEDD4L in the presence of albumin; which promotes endocytosis and proteasomal degradation. In terms of tissue distribution, kidney specific.

The protein localises to the golgi apparatus membrane. It is found in the endosome membrane. It localises to the cell membrane. The enzyme catalyses 2 chloride(in) + H(+)(out) = 2 chloride(out) + H(+)(in). Functionally, proton-coupled chloride transporter. Functions as antiport system and exchanges chloride ions against protons. Important for normal acidification of the endosome lumen. May play an important role in renal tubular function. The CLC channel family contains both chloride channels and proton-coupled anion transporters that exchange chloride or another anion for protons. The absence of conserved gating glutamate residues is typical for family members that function as channels. In Rattus norvegicus (Rat), this protein is H(+)/Cl(-) exchange transporter 5 (Clcn5).